A 776-amino-acid polypeptide reads, in one-letter code: Protein phosphatase 1 regulatory subunit 21 (776 aa).

Coiled-coil stretches lie at residues 4 to 206 (GDLQ…LKTL), 432 to 466 (RLHDISQELSKHYNNKAALEQELPAATDKLKTTND), and 555 to 597 (ESRE…KETL).

Component of the FERRY complex.

It is found in the early endosome. Component of the FERRY complex (Five-subunit Endosomal Rab5 and RNA/ribosome intermediary). The FERRY complex directly interacts with mRNAs and RAB5A, and functions as a RAB5A effector involved in the localization and the distribution of specific mRNAs most likely by mediating their endosomal transport. The complex recruits mRNAs and ribosomes to early endosomes through direct mRNA-interaction. Putative regulator of protein phosphatase 1 (PP1) activity. May play a role in the endosomal sorting process or in endosome maturation pathway. This Xenopus laevis (African clawed frog) protein is Protein phosphatase 1 regulatory subunit 21 (ppp1r21).